A 345-amino-acid polypeptide reads, in one-letter code: Uroporphyrinogen decarboxylase (345 aa).

Residues 30 to 34 (RQAGR), Asp-79, Tyr-154, Ser-209, and His-322 each bind substrate.

The protein belongs to the uroporphyrinogen decarboxylase family. As to quaternary structure, homodimer.

The protein resides in the cytoplasm. It catalyses the reaction uroporphyrinogen III + 4 H(+) = coproporphyrinogen III + 4 CO2. It functions in the pathway porphyrin-containing compound metabolism; protoporphyrin-IX biosynthesis; coproporphyrinogen-III from 5-aminolevulinate: step 4/4. Catalyzes the decarboxylation of four acetate groups of uroporphyrinogen-III to yield coproporphyrinogen-III. This is Uroporphyrinogen decarboxylase from Nocardioides sp. (strain ATCC BAA-499 / JS614).